Here is a 159-residue protein sequence, read N- to C-terminus: MKTAVHALSPDSRPETQHQTRKNEEAAPGSPTPRAGREGRKGPASILRRSPQERCGRGDEPRRTTRHVRFREPLEVAVHYIACREPTTAVQAPSRPRPRGGSLLLRLTACILLALALGMCCGQAGPMARALEDFRARLLAALLRLPLAALDCWRCLLQL.

Residues 1-67 (MKTAVHALSP…GDEPRRTTRH (67 aa)) form a disordered region. Composition is skewed to basic and acidic residues over residues 12 to 25 (SRPE…KNEE) and 50 to 63 (SPQE…EPRR). The helical transmembrane segment at 107-124 (LTACILLALALGMCCGQA) threads the bilayer.

It localises to the cell membrane. This Bos taurus (Bovine) protein is Nutritionally-regulated adipose and cardiac-enriched protein homolog (NRAC).